The primary structure comprises 156 residues: Small ribosomal subunit protein uS7 (156 aa).

The protein belongs to the universal ribosomal protein uS7 family. Part of the 30S ribosomal subunit. Contacts proteins S9 and S11.

Functionally, one of the primary rRNA binding proteins, it binds directly to 16S rRNA where it nucleates assembly of the head domain of the 30S subunit. Is located at the subunit interface close to the decoding center, probably blocks exit of the E-site tRNA. The sequence is that of Small ribosomal subunit protein uS7 from Streptococcus thermophilus (strain CNRZ 1066).